A 233-amino-acid polypeptide reads, in one-letter code: 2-C-methyl-D-erythritol 4-phosphate cytidylyltransferase (233 aa).

The protein belongs to the IspD/TarI cytidylyltransferase family. IspD subfamily.

It carries out the reaction 2-C-methyl-D-erythritol 4-phosphate + CTP + H(+) = 4-CDP-2-C-methyl-D-erythritol + diphosphate. It participates in isoprenoid biosynthesis; isopentenyl diphosphate biosynthesis via DXP pathway; isopentenyl diphosphate from 1-deoxy-D-xylulose 5-phosphate: step 2/6. Functionally, catalyzes the formation of 4-diphosphocytidyl-2-C-methyl-D-erythritol from CTP and 2-C-methyl-D-erythritol 4-phosphate (MEP). This is 2-C-methyl-D-erythritol 4-phosphate cytidylyltransferase from Syntrophotalea carbinolica (strain DSM 2380 / NBRC 103641 / GraBd1) (Pelobacter carbinolicus).